Consider the following 254-residue polypeptide: MIRIGIHGASGKMGYEIISNLKNNEQAILSVAYTIEPMPFDVGDAIVTNDLKTLFDNSDVIIDFSIKDGAVNLINYARTNPKPLIIGTTGLGSEGDELIKLASSVMPILQATNMSLGVAVLNRLTEFASRVLDGFDIEIVEMHHRRKVDAPSGTALTLATHAAKARNLTLDSVRVSGRDGMIGARSKDEIAVMSLRGGDIVGRHTVGFYNDGEFIELNHTATSRATFAKGAIKAAIWIKSKEPKLYSIYDCLGL.

Residues 8–13 (GASGKM), 87–89 (GTT), and 111–114 (ATNM) contribute to the NAD(+) site. His143 serves as the catalytic Proton donor/acceptor. His144 lines the (S)-2,3,4,5-tetrahydrodipicolinate pocket. The active-site Proton donor is Lys147. 153 to 154 (GT) serves as a coordination point for (S)-2,3,4,5-tetrahydrodipicolinate.

It belongs to the DapB family.

It localises to the cytoplasm. The catalysed reaction is (S)-2,3,4,5-tetrahydrodipicolinate + NAD(+) + H2O = (2S,4S)-4-hydroxy-2,3,4,5-tetrahydrodipicolinate + NADH + H(+). The enzyme catalyses (S)-2,3,4,5-tetrahydrodipicolinate + NADP(+) + H2O = (2S,4S)-4-hydroxy-2,3,4,5-tetrahydrodipicolinate + NADPH + H(+). It functions in the pathway amino-acid biosynthesis; L-lysine biosynthesis via DAP pathway; (S)-tetrahydrodipicolinate from L-aspartate: step 4/4. Catalyzes the conversion of 4-hydroxy-tetrahydrodipicolinate (HTPA) to tetrahydrodipicolinate. This chain is 4-hydroxy-tetrahydrodipicolinate reductase, found in Campylobacter fetus subsp. fetus (strain 82-40).